Consider the following 256-residue polypeptide: Hydroxyacylglutathione hydrolase (256 aa).

Zn(2+)-binding residues include H55, H57, D59, H60, H113, D132, and H170.

Belongs to the metallo-beta-lactamase superfamily. Glyoxalase II family. As to quaternary structure, monomer. Zn(2+) serves as cofactor.

It catalyses the reaction an S-(2-hydroxyacyl)glutathione + H2O = a 2-hydroxy carboxylate + glutathione + H(+). Its pathway is secondary metabolite metabolism; methylglyoxal degradation; (R)-lactate from methylglyoxal: step 2/2. Thiolesterase that catalyzes the hydrolysis of S-D-lactoyl-glutathione to form glutathione and D-lactic acid. This chain is Hydroxyacylglutathione hydrolase, found in Methylococcus capsulatus (strain ATCC 33009 / NCIMB 11132 / Bath).